The sequence spans 78 residues: Acyl carrier protein (78 aa).

The 76-residue stretch at 2 to 77 (SDTADRVQKI…DATKYIEEHK (76 aa)) folds into the Carrier domain. An O-(pantetheine 4'-phosphoryl)serine modification is found at Ser37.

This sequence belongs to the acyl carrier protein (ACP) family. In terms of processing, 4'-phosphopantetheine is transferred from CoA to a specific serine of apo-ACP by AcpS. This modification is essential for activity because fatty acids are bound in thioester linkage to the sulfhydryl of the prosthetic group.

It is found in the cytoplasm. It functions in the pathway lipid metabolism; fatty acid biosynthesis. Carrier of the growing fatty acid chain in fatty acid biosynthesis. The protein is Acyl carrier protein of Erythrobacter litoralis (strain HTCC2594).